The primary structure comprises 468 residues: Arginine biosynthesis bifunctional protein ArgJ, mitochondrial (468 aa).

The N-terminal 23 residues, 1–23 (MVGFSRCALSQLRQPKAQLVRSF), are a transit peptide targeting the mitochondrion. Positions 198, 227, 238, 324, 463, and 468 each coordinate substrate. Thr238 acts as the Nucleophile in catalysis.

This sequence belongs to the ArgJ family. As to quaternary structure, heterodimer of an alpha and a beta chain. The alpha and beta chains are autoproteolytically processed from a single precursor protein within the mitochondrion.

It is found in the mitochondrion matrix. It carries out the reaction N(2)-acetyl-L-ornithine + L-glutamate = N-acetyl-L-glutamate + L-ornithine. It catalyses the reaction L-glutamate + acetyl-CoA = N-acetyl-L-glutamate + CoA + H(+). It participates in amino-acid biosynthesis; L-arginine biosynthesis; L-ornithine and N-acetyl-L-glutamate from L-glutamate and N(2)-acetyl-L-ornithine (cyclic): step 1/1. The protein operates within amino-acid biosynthesis; L-arginine biosynthesis; N(2)-acetyl-L-ornithine from L-glutamate: step 1/4. Its function is as follows. Catalyzes two activities which are involved in the cyclic version of arginine biosynthesis: the synthesis of acetylglutamate from glutamate and acetyl-CoA, and of ornithine by transacetylation between acetylornithine and glutamate. The polypeptide is Arginine biosynthesis bifunctional protein ArgJ, mitochondrial (Podospora anserina (strain S / ATCC MYA-4624 / DSM 980 / FGSC 10383) (Pleurage anserina)).